The primary structure comprises 264 residues: DNA repair protein RecO (264 aa).

Belongs to the RecO family.

In terms of biological role, involved in DNA repair and RecF pathway recombination. The sequence is that of DNA repair protein RecO from Prosthecochloris aestuarii (strain DSM 271 / SK 413).